The chain runs to 205 residues: Large ribosomal subunit protein uL4 (205 aa).

The segment at 44–79 (RAGTKAQKTRREVSGGGAKPWRQKGTGRARAGSSRS) is disordered.

Belongs to the universal ribosomal protein uL4 family. As to quaternary structure, part of the 50S ribosomal subunit.

One of the primary rRNA binding proteins, this protein initially binds near the 5'-end of the 23S rRNA. It is important during the early stages of 50S assembly. It makes multiple contacts with different domains of the 23S rRNA in the assembled 50S subunit and ribosome. In terms of biological role, forms part of the polypeptide exit tunnel. The polypeptide is Large ribosomal subunit protein uL4 (Coxiella burnetii (strain RSA 331 / Henzerling II)).